A 390-amino-acid polypeptide reads, in one-letter code: Chorismate synthase 2 (390 aa).

2 residues coordinate NADP(+): Arg39 and Arg45. FMN-binding positions include 132–134 (RSS), 253–254 (NA), Gly298, 313–317 (KPIPT), and Arg339.

It belongs to the chorismate synthase family. Homotetramer. Requires FMNH2 as cofactor.

The catalysed reaction is 5-O-(1-carboxyvinyl)-3-phosphoshikimate = chorismate + phosphate. It participates in metabolic intermediate biosynthesis; chorismate biosynthesis; chorismate from D-erythrose 4-phosphate and phosphoenolpyruvate: step 7/7. In terms of biological role, catalyzes the anti-1,4-elimination of the C-3 phosphate and the C-6 proR hydrogen from 5-enolpyruvylshikimate-3-phosphate (EPSP) to yield chorismate, which is the branch point compound that serves as the starting substrate for the three terminal pathways of aromatic amino acid biosynthesis. This reaction introduces a second double bond into the aromatic ring system. The polypeptide is Chorismate synthase 2 (Bacillus cereus (strain ATCC 10987 / NRS 248)).